Reading from the N-terminus, the 533-residue chain is Non-specific phospholipase C1 (533 aa).

Residues 1–22 form the signal peptide; sequence MAFRRVLTTVILFCYLLISSQS.

Belongs to the bacterial phospholipase C family. In terms of tissue distribution, expressed in roots, leaves, stems, flowers and siliques.

The protein resides in the secreted. This Arabidopsis thaliana (Mouse-ear cress) protein is Non-specific phospholipase C1 (NPC1).